The primary structure comprises 687 residues: Putative pentatricopeptide repeat-containing protein At3g15930 (687 aa).

PPR repeat units lie at residues 98–132 (DVVVWNNMIKGWSKVDCDGEGVRLYLNMLKEGVTP), 133–168 (DSHTFPFLLNGLKRDGGALACGKKLHCHVVKFGLGS), 169–199 (NLYVQNALVKMYSLCGLMDMARGVFDRRCKE), 200–234 (DVFSWNLMISGYNRMKEYEESIELLVEMERNLVSP), 235–269 (TSVTLLLVLSACSKVKDKDLCKRVHEYVSECKTEP), 270–304 (SLRLENALVNAYAACGEMDIAVRIFRSMKARDVIS), 305–331 (WTSIVKGYVERGNLKLARTYFDQMPVR), 332–366 (DRISWTIMIDGYLRAGCFNESLEIFREMQSAGMIP), 367–401 (DEFTMVSVLTACAHLGSLEIGEWIKTYIDKNKIKN), 402–432 (DVVVGNALIDMYFKCGCSEKAQKVFHDMDQR), 433–467 (DKFTWTAMVVGLANNGQGQEAIKVFFQMQDMSIQP), 468–498 (DDITYLGVLSACNHSGMVDQARKFFAKMRSD), and 504–534 (SLVHYGCMVDMLGRAGLVKEAYEILRKMPMN). Positions 539–614 (VWGALLGASR…TPGFSLIEVN (76 aa)) are type E motif. The tract at residues 615 to 645 (GFAHEFVAGDKSHLQSEEIYMKLEELAQEST) is type E(+) motif.

The protein belongs to the PPR family. PCMP-E subfamily.

The chain is Putative pentatricopeptide repeat-containing protein At3g15930 (PCMP-E51) from Arabidopsis thaliana (Mouse-ear cress).